Consider the following 287-residue polypeptide: AA9 family lytic polysaccharide monooxygenase D (287 aa).

Residues methionine 1–alanine 17 form the signal peptide. A Cu(2+)-binding site is contributed by histidine 18. A disulfide bridge links cysteine 67 with cysteine 189. Residue histidine 176 coordinates O2. Cu(2+) is bound at residue tyrosine 186. N-linked (GlcNAc...) asparagine glycosylation is found at asparagine 220 and asparagine 250. Residues threonine 239–alanine 287 are disordered. Basic and acidic residues predominate over residues tyrosine 274 to alanine 287.

This sequence belongs to the polysaccharide monooxygenase AA9 family. Cu(2+) is required as a cofactor.

The protein resides in the secreted. The catalysed reaction is [(1-&gt;4)-beta-D-glucosyl]n+m + reduced acceptor + O2 = 4-dehydro-beta-D-glucosyl-[(1-&gt;4)-beta-D-glucosyl]n-1 + [(1-&gt;4)-beta-D-glucosyl]m + acceptor + H2O.. In terms of biological role, lytic polysaccharide monooxygenase (LPMO) that depolymerizes crystalline and amorphous polysaccharides via the oxidation of scissile alpha- or beta-(1-4)-glycosidic bonds, yielding C1 oxidation products. Catalysis by LPMOs requires the reduction of the active-site copper from Cu(II) to Cu(I) by a reducing agent and H(2)O(2) or O(2) as a cosubstrate. Active on celluloseas as well as on the hemicellulose xyloglucan. Shows synergy with other hydrolases in degrading sorghum stover. The sequence is that of AA9 family lytic polysaccharide monooxygenase D from Emericella nidulans (strain FGSC A4 / ATCC 38163 / CBS 112.46 / NRRL 194 / M139) (Aspergillus nidulans).